We begin with the raw amino-acid sequence, 304 residues long: Peroxisomal membrane protein 13 (304 aa).

2 disordered regions span residues 1-78 (MASQ…WEQQ) and 258-304 (PRKM…VWGN). Composition is skewed to polar residues over residues 19–44 (NTSGPNPFRPPSNTSTAGSVEASGTA) and 56–67 (RPNTAANMNSLS). A compositionally biased stretch (low complexity) spans 262 to 279 (QQPPQGPNGLPLPHQPHG).

It belongs to the peroxin-13 family. In terms of assembly, interacts with PEX14; forming the PEX13-PEX14 docking complex. Interacts (via N-terminus) with PEX7, but not with PEX5. Interacts with APEM9 (via N-terminus). Highly expressed in pollen. Detected in shoots, roots, stems, leaves, inflorescences and emasculated postils. Strongly expressed in both male and female gametophytes during fertilization.

It localises to the peroxisome membrane. In terms of biological role, component of the PEX13-PEX14 docking complex, a translocon channel that specifically mediates the import of peroxisomal cargo proteins bound to PEX5 receptor. The PEX13-PEX14 docking complex forms a large import pore which can be opened to a diameter of about 9 nm. Mechanistically, PEX5 receptor along with cargo proteins associates with the PEX14 subunit of the PEX13-PEX14 docking complex in the cytosol, leading to the insertion of the receptor into the organelle membrane with the concomitant translocation of the cargo into the peroxisome matrix. Essential for pollen-tube discharge that take place only in the presence of functional peroxisomes in either the male or the female gametophyte. The protein is Peroxisomal membrane protein 13 of Arabidopsis thaliana (Mouse-ear cress).